The primary structure comprises 202 residues: MLQTLIGVHSYMPWCYEIPAMAIFLRSTITLPIAIASLKTARRFVQVQPLIKEAKKRCRTNTDFRTVRKKLYKRFNCHPLMIYALPITQLPLFAFASYQLRQAVDVCPESMSTEGMLWFTDLTLPDPHGVLPAVLAVTYLTNMSILKRPSDSRLLKIFNTAGIMSAFFVSFMAFKTSTALSLYWTTSAIYSLVQNVALRKLL.

A helical membrane pass occupies residues 15–35 (CYEIPAMAIFLRSTITLPIAI). Topologically, residues 36-74 (ASLKTARRFVQVQPLIKEAKKRCRTNTDFRTVRKKLYKR) are mitochondrial matrix. A helical membrane pass occupies residues 75–95 (FNCHPLMIYALPITQLPLFAF). Topologically, residues 96 to 125 (ASYQLRQAVDVCPESMSTEGMLWFTDLTLP) are mitochondrial intermembrane. A helical transmembrane segment spans residues 126–146 (DPHGVLPAVLAVTYLTNMSIL). Residues 147-168 (KRPSDSRLLKIFNTAGIMSAFF) lie on the Mitochondrial matrix side of the membrane. The helical transmembrane segment at 169 to 189 (VSFMAFKTSTALSLYWTTSAI) threads the bilayer. Topologically, residues 190-202 (YSLVQNVALRKLL) are mitochondrial intermembrane.

It belongs to the OXA1/ALB3/YidC family.

Its subcellular location is the mitochondrion inner membrane. Required for the insertion of integral membrane proteins into the mitochondrial inner membrane. Essential for the activity and assembly of cytochrome c oxidase. Plays a central role in the translocation and export of the C-terminal part of the cox2 protein into the mitochondrial intermembrane space. This is Cytochrome c oxidase assembly protein cox18, mitochondrial (cox18) from Schizosaccharomyces pombe (strain 972 / ATCC 24843) (Fission yeast).